The sequence spans 155 residues: 2-C-methyl-D-erythritol 2,4-cyclodiphosphate synthase (155 aa).

The a divalent metal cation site is built by aspartate 8 and histidine 10. 4-CDP-2-C-methyl-D-erythritol 2-phosphate is bound by residues 8-10 (DVH) and 34-35 (HS). Histidine 42 is a binding site for a divalent metal cation. 4-CDP-2-C-methyl-D-erythritol 2-phosphate is bound by residues 56-58 (DIG), 61-65 (FPDSD), 100-106 (AQKPKML), 132-135 (TTEE), phenylalanine 139, and lysine 142.

It belongs to the IspF family. In terms of assembly, homotrimer. A divalent metal cation serves as cofactor.

It carries out the reaction 4-CDP-2-C-methyl-D-erythritol 2-phosphate = 2-C-methyl-D-erythritol 2,4-cyclic diphosphate + CMP. Its pathway is isoprenoid biosynthesis; isopentenyl diphosphate biosynthesis via DXP pathway; isopentenyl diphosphate from 1-deoxy-D-xylulose 5-phosphate: step 4/6. Its function is as follows. Involved in the biosynthesis of isopentenyl diphosphate (IPP) and dimethylallyl diphosphate (DMAPP), two major building blocks of isoprenoid compounds. Catalyzes the conversion of 4-diphosphocytidyl-2-C-methyl-D-erythritol 2-phosphate (CDP-ME2P) to 2-C-methyl-D-erythritol 2,4-cyclodiphosphate (ME-CPP) with a corresponding release of cytidine 5-monophosphate (CMP). This Clostridium botulinum (strain 657 / Type Ba4) protein is 2-C-methyl-D-erythritol 2,4-cyclodiphosphate synthase.